Here is a 661-residue protein sequence, read N- to C-terminus: MEVSSRIKELREEMQKHDYHYYILDAPLISDSGYDRLMQELKKLEEEYPQYITADSPTQRVAGKASEKFSPVRHRFPLLSLDNAFSYQDLLEFDRRIGRVARTLSYMAELKIDGVSIALVYENGVLLNAATRGDGLVGEDVTANIRTIKTIPLRLRHSLPRLEVRGEVFMPKQEFIRLNEEKEEKGERVFANPRNAAAGSLRQLDPRVTAGRALSAFVYDIIYMEGQTLAEQQEAWHFMQELGLPVNPEVRFCADINAVLAFTEEYAEKRHELPYEIDGVVVKLNTLAEREELGATARSPRWAMAYKFPAEEKETRLLGVEINVGRTGIIAPTALLEPVFLAGTTVSRASMHNFDLIKEKDLRIGDMVLLHKAGDIIPEIIASLPEKRSGEERVITPPENCPACDSKVARFAGEVAYRCENINCPARLKESLIFFASRGAMDIDGLGSAVIEQLVNKDMVKRIDDLYRLREEEITALERMGPKSAANLIKAINESKSRPLSRLLTALGIRHIGARSAKILSRHIHDIDDFYKLGVENLTSIPEIGPKMAESMVNFFAEPRNRETIEDLKDLGVNTREEAIEAGEQLLQGKTFVLTGTLPSLTRQQASEMIESRGGKVSSSVSKKTSYVVAGDDPGSKLDKALQLELTILDEAGFLNLLGLS.

Residues 31–35 (DSGYD), 80–81 (SL), and Glu109 contribute to the NAD(+) site. Residue Lys111 is the N6-AMP-lysine intermediate of the active site. Residues Arg132, Glu167, Lys283, and Lys307 each contribute to the NAD(+) site. Zn(2+) contacts are provided by Cys401, Cys404, Cys419, and Cys424. In terms of domain architecture, BRCT spans 582-661 (AGEQLLQGKT…AGFLNLLGLS (80 aa)).

This sequence belongs to the NAD-dependent DNA ligase family. LigA subfamily. It depends on Mg(2+) as a cofactor. The cofactor is Mn(2+).

It catalyses the reaction NAD(+) + (deoxyribonucleotide)n-3'-hydroxyl + 5'-phospho-(deoxyribonucleotide)m = (deoxyribonucleotide)n+m + AMP + beta-nicotinamide D-nucleotide.. Functionally, DNA ligase that catalyzes the formation of phosphodiester linkages between 5'-phosphoryl and 3'-hydroxyl groups in double-stranded DNA using NAD as a coenzyme and as the energy source for the reaction. It is essential for DNA replication and repair of damaged DNA. This chain is DNA ligase, found in Syntrophomonas wolfei subsp. wolfei (strain DSM 2245B / Goettingen).